A 121-amino-acid polypeptide reads, in one-letter code: Small ribosomal subunit protein uS13 (121 aa).

Residues 95–121 are disordered; sequence GLPVRGQKTKTNARTRKGKRKTVGAKS.

It belongs to the universal ribosomal protein uS13 family. Part of the 30S ribosomal subunit. Forms a loose heterodimer with protein S19. Forms two bridges to the 50S subunit in the 70S ribosome.

Its function is as follows. Located at the top of the head of the 30S subunit, it contacts several helices of the 16S rRNA. In the 70S ribosome it contacts the 23S rRNA (bridge B1a) and protein L5 of the 50S subunit (bridge B1b), connecting the 2 subunits; these bridges are implicated in subunit movement. Contacts the tRNAs in the A and P-sites. In Campylobacter jejuni subsp. jejuni serotype O:6 (strain 81116 / NCTC 11828), this protein is Small ribosomal subunit protein uS13.